The following is a 357-amino-acid chain: Serine protease 1 (357 aa).

The signal sequence occupies residues 1–29 (MRRTTRARTGLSALLLAASLGLGAAPAGA). A propeptide spanning residues 30–170 (DAPQRPAPTP…TRVPGVFQRE (141 aa)) is cleaved from the precursor. A disulfide bridge links cysteine 184 with cysteine 204. Active-site charge relay system residues include histidine 203, aspartate 232, and serine 313. Cysteine 307 and cysteine 333 are oxidised to a cystine.

Belongs to the peptidase S1 family.

Its subcellular location is the secreted. Its function is as follows. Serine protease that preferentially cleaves peptide bonds on the C-terminal side of aspartate and glutamate with a 10-fold higher reactivity for a glutamyl bond than an aspartyl bond. The polypeptide is Serine protease 1 (Streptomyces fradiae (Streptomyces roseoflavus)).